A 106-amino-acid chain; its full sequence is Ferredoxin (106 aa).

C9 and C17 together coordinate [3Fe-4S] cluster. [4Fe-4S] cluster is bound by residues C21, C40, C43, and C46. One can recognise a 4Fe-4S ferredoxin-type domain in the interval 31–60; it reads RMLYIHPDECVDCGACEPVCPVEAIYYEDD. A [3Fe-4S] cluster-binding site is contributed by C50. A disordered region spans residues 84–106; sequence GAAKVGKVDRDVEPVSSLPPQGE.

The cofactor is [4Fe-4S] cluster. [3Fe-4S] cluster serves as cofactor.

Ferredoxins are iron-sulfur proteins that transfer electrons in a wide variety of metabolic reactions. The chain is Ferredoxin (fdxA) from Saccharopolyspora erythraea (Streptomyces erythraeus).